A 223-amino-acid polypeptide reads, in one-letter code: Proteasome subunit beta type-1 (223 aa).

The protein belongs to the peptidase T1B family. The 26S proteasome consists of a 20S proteasome core and two 19S regulatory subunits. The 20S proteasome core is composed of 28 subunits that are arranged in four stacked rings, resulting in a barrel-shaped structure. The two end rings are each formed by seven alpha subunits, and the two central rings are each formed by seven beta subunits. The catalytic chamber with the active sites is on the inside of the barrel.

Its subcellular location is the cytoplasm. It localises to the nucleus. Its function is as follows. Non-catalytic component of the proteasome, a multicatalytic proteinase complex which is characterized by its ability to cleave peptides with Arg, Phe, Tyr, Leu, and Glu adjacent to the leaving group at neutral or slightly basic pH. The proteasome has an ATP-dependent proteolytic activity. The polypeptide is Proteasome subunit beta type-1 (PBF1) (Petunia hybrida (Petunia)).